Here is a 324-residue protein sequence, read N- to C-terminus: Kelch domain-containing protein PF0436 (324 aa).

Kelch repeat units lie at residues 112–160 (EVLL…LWDG), 254–301 (GIYI…WDGR), and 303–323 (IYIVGGRGPGPNKYIVIFTPK).

The sequence is that of Kelch domain-containing protein PF0436 from Pyrococcus furiosus (strain ATCC 43587 / DSM 3638 / JCM 8422 / Vc1).